A 132-amino-acid polypeptide reads, in one-letter code: Small ribosomal subunit protein uS8 (132 aa).

The protein belongs to the universal ribosomal protein uS8 family. As to quaternary structure, part of the 30S ribosomal subunit. Contacts proteins S5 and S12.

Its function is as follows. One of the primary rRNA binding proteins, it binds directly to 16S rRNA central domain where it helps coordinate assembly of the platform of the 30S subunit. This Rhizobium etli (strain CIAT 652) protein is Small ribosomal subunit protein uS8.